A 93-amino-acid polypeptide reads, in one-letter code: Small ribosomal subunit protein uS17 (93 aa).

Belongs to the universal ribosomal protein uS17 family. In terms of assembly, part of the 30S ribosomal subunit.

One of the primary rRNA binding proteins, it binds specifically to the 5'-end of 16S ribosomal RNA. The sequence is that of Small ribosomal subunit protein uS17 from Corynebacterium aurimucosum (strain ATCC 700975 / DSM 44827 / CIP 107346 / CN-1) (Corynebacterium nigricans).